A 345-amino-acid chain; its full sequence is Anthranilate phosphoribosyltransferase (345 aa).

Residues glycine 75, 78-79, serine 83, 85-88, 103-111, and glycine 115 contribute to the 5-phospho-alpha-D-ribose 1-diphosphate site; these read GD, NIST, and KHGNRAASS. Glycine 75 provides a ligand contact to anthranilate. Serine 87 is a binding site for Mg(2+). Residue asparagine 106 participates in anthranilate binding. Arginine 161 lines the anthranilate pocket. Positions 219 and 220 each coordinate Mg(2+).

Belongs to the anthranilate phosphoribosyltransferase family. In terms of assembly, homodimer. Requires Mg(2+) as cofactor.

It carries out the reaction N-(5-phospho-beta-D-ribosyl)anthranilate + diphosphate = 5-phospho-alpha-D-ribose 1-diphosphate + anthranilate. It participates in amino-acid biosynthesis; L-tryptophan biosynthesis; L-tryptophan from chorismate: step 2/5. Functionally, catalyzes the transfer of the phosphoribosyl group of 5-phosphorylribose-1-pyrophosphate (PRPP) to anthranilate to yield N-(5'-phosphoribosyl)-anthranilate (PRA). This Nocardia farcinica (strain IFM 10152) protein is Anthranilate phosphoribosyltransferase.